A 350-amino-acid chain; its full sequence is Ribosomal RNA small subunit methyltransferase C (350 aa).

It belongs to the methyltransferase superfamily. RsmC family. In terms of assembly, monomer.

It is found in the cytoplasm. The catalysed reaction is guanosine(1207) in 16S rRNA + S-adenosyl-L-methionine = N(2)-methylguanosine(1207) in 16S rRNA + S-adenosyl-L-homocysteine + H(+). In terms of biological role, specifically methylates the guanine in position 1207 of 16S rRNA in the 30S particle. This chain is Ribosomal RNA small subunit methyltransferase C, found in Sodalis glossinidius (strain morsitans).